A 346-amino-acid chain; its full sequence is N-acetyl-gamma-glutamyl-phosphate reductase (346 aa).

Cys149 is a catalytic residue.

The protein belongs to the NAGSA dehydrogenase family. Type 1 subfamily.

It localises to the cytoplasm. It carries out the reaction N-acetyl-L-glutamate 5-semialdehyde + phosphate + NADP(+) = N-acetyl-L-glutamyl 5-phosphate + NADPH + H(+). Its pathway is amino-acid biosynthesis; L-arginine biosynthesis; N(2)-acetyl-L-ornithine from L-glutamate: step 3/4. In terms of biological role, catalyzes the NADPH-dependent reduction of N-acetyl-5-glutamyl phosphate to yield N-acetyl-L-glutamate 5-semialdehyde. In Micrococcus luteus (strain ATCC 4698 / DSM 20030 / JCM 1464 / CCM 169 / CCUG 5858 / IAM 1056 / NBRC 3333 / NCIMB 9278 / NCTC 2665 / VKM Ac-2230) (Micrococcus lysodeikticus), this protein is N-acetyl-gamma-glutamyl-phosphate reductase.